A 578-amino-acid polypeptide reads, in one-letter code: Transcriptional regulator SKO1 (578 aa).

Over residues 39 to 50 (NDAISDVNSVAT) the composition is skewed to polar residues. Disordered stretches follow at residues 39 to 169 (NDAI…TQQP), 176 to 195 (MSGMRKTGLTPNESNIRSGL), 287 to 311 (LQQDQSSQALVGGLPPSQPQPQPQP), and 342 to 489 (ESKP…RKNF). Low complexity predominate over residues 51–62 (SGSSINNGSSSN). Composition is skewed to polar residues over residues 70–80 (NISSVNQQQGV) and 107–132 (GGTTSRQYSNSTNSGSLQSNTDTLGS). Positions 154-169 (PQQQQQPQQQQQTQQP) are enriched in low complexity. The segment covering 184 to 193 (LTPNESNIRS) has biased composition (polar residues). Composition is skewed to low complexity over residues 287-296 (LQQDQSSQAL) and 356-370 (DLNPTADTTTNTTTA). Basic residues predominate over residues 384–402 (KKAKVAKGKKKEPKSKSKG). Residues 415–443 (KPEDENVPGKENGNEENHKVEAESKEEHL) show a composition bias toward basic and acidic residues. Residues 445–471 (NGNETTTTKTNNTGNSSNGTTTTTTTK) show a composition bias toward low complexity. The bZIP domain maps to 483-546 (DDKRKNFLER…LLLKEKHNIQ (64 aa)). Residues 485-505 (KRKNFLERNRVAASKCRQRKK) form a basic motif region. Residues 508-515 (IQKMEEEL) are leucine-zipper.

Belongs to the bZIP family. In terms of processing, undergoes HOG1-dependent phosphorylation after osmotic stress.

The protein localises to the nucleus. Functionally, transcription repressor involved in cell wall damage response. Regulates 79 caspofungin-responsive genes, including several cell wall biogenesis genes such as CRH11, MNN2, and SKN1. Also controls the expression of pathogenesis and hyphal related genes and represses the yeast-to-hypha transition. Mediates the response to oxidative stress. The protein is Transcriptional regulator SKO1 (SKO1) of Candida albicans (strain SC5314 / ATCC MYA-2876) (Yeast).